The chain runs to 228 residues: uncharacterized protein (228 aa).

It to E.coli YbfG.

This is an uncharacterized protein from Haemophilus influenzae (strain ATCC 51907 / DSM 11121 / KW20 / Rd).